Consider the following 261-residue polypeptide: UPF0246 protein Daci_5283 (261 aa).

It belongs to the UPF0246 family.

This is UPF0246 protein Daci_5283 from Delftia acidovorans (strain DSM 14801 / SPH-1).